Reading from the N-terminus, the 117-residue chain is Large ribosomal subunit protein bL20 (117 aa).

It belongs to the bacterial ribosomal protein bL20 family.

Binds directly to 23S ribosomal RNA and is necessary for the in vitro assembly process of the 50S ribosomal subunit. It is not involved in the protein synthesizing functions of that subunit. The chain is Large ribosomal subunit protein bL20 from Aliivibrio salmonicida (strain LFI1238) (Vibrio salmonicida (strain LFI1238)).